The following is a 313-amino-acid chain: MVIMSASWSSHAFQPVLERIADEIERTPGRGRPADYIPALAACDPRRFGMAVAELDGTVYGVGDWRQPFSTQSITKVFTLALDLAREGDALWEHVGREPSGNPFNSLVQLEYESGIPRNPFINAGALVVTDRLQTQTGDAAGSLLEFLRAESGNPRLTFDQDVAASEAAHGDRNAALGHFMASYGNIDNSVPVLLDQYFRQCSIEASCADLALATGFLARHGIRADGSRLLTQSQAKQVNAVMLTCGTYDAAGDFAYRVGLPGKSGVGGGIIAVVPGRCTLCVWSPGLDERGNSVAGVAALDRFTTLTGVSVF.

Positions 73, 123, 167, 174, 198, 249, and 267 each coordinate substrate.

Belongs to the glutaminase family. As to quaternary structure, homotetramer.

The catalysed reaction is L-glutamine + H2O = L-glutamate + NH4(+). This Streptomyces avermitilis (strain ATCC 31267 / DSM 46492 / JCM 5070 / NBRC 14893 / NCIMB 12804 / NRRL 8165 / MA-4680) protein is Glutaminase.